The primary structure comprises 537 residues: MPSLLVLTFSACVLLGWALLADCTGGGGSGGAGPGRGRREREALPPQKIEVLVLLPQDDSYLFSLARVRPAIEYALRTVEGNATGRRLLPAGTRFQVAYEDSDCGNRALFSLVDRVAAARGAKPDLILGPVCEYAAAPVARLASHWDLPMLSAGALAAGFQHKDTEYSHLTRVAPSYAKMGEMMLALFRHHQWSRAVLVYSDDKLERNCFFTLEGVHEVFQEEGLHTSAYNFDETKDLDLEDIVRHIQASERVVIMCASSDTIRGIMLAAHRHGMTSGDYAFFNIELFNSSFYGDGSWKRGDKHDFEAKQAYSSLQTITLLRTVKPEFEKFSMEVKSSVEKQGLSEEDYVNMFVEGFHDAILLYVLALREVLRAGYSKKDGGKIIQQTWNRTFEGIAGQVSIDANGDRYGDFSVIAMTDTEAGTQEVIGDYFGKEGRFEMRPNVKYPWGPLKLRIDETRMVEHTNSSPCKASGGLEESAVTGIVVGALLGAGLLMAFYFFRKKYRITIERRNQQEESNVGKHRELREDSIRSHFSVA.

A signal peptide spans 1–20 (MPSLLVLTFSACVLLGWALL). Residues 21 to 41 (ADCTGGGGSGGAGPGRGRRER) constitute a propeptide that is removed on maturation. The Extracellular segment spans residues 42–477 (EALPPQKIEV…PCKASGGLEE (436 aa)). N-linked (GlcNAc...) asparagine glycosylation occurs at asparagine 82. 2 disulfides stabilise this stretch: cysteine 104-cysteine 132 and cysteine 209-cysteine 257. Asparagine 289 and asparagine 390 each carry an N-linked (GlcNAc...) asparagine glycan. A helical transmembrane segment spans residues 478–500 (SAVTGIVVGALLGAGLLMAFYFF). Topologically, residues 501–537 (RKKYRITIERRNQQEESNVGKHRELREDSIRSHFSVA) are cytoplasmic.

It belongs to the ANF receptor family. As to quaternary structure, homodimer; disulfide-linked. Interacts with OSTN.

It localises to the cell membrane. Receptor for the natriuretic peptide hormones, binding with similar affinities atrial natriuretic peptide NPPA/ANP, brain natriuretic peptide NPPB/BNP, and C-type natriuretic peptide NPPC/CNP. May function as a clearance receptor for NPPA, NPPB and NPPC, regulating their local concentrations and effects. Acts as a regulator of osteoblast differentiation and bone growth by binding to its ligand osteocrin, thereby preventing binding between NPR3/NPR-C and natriuretic peptides, leading to increase cGMP production. The protein is Atrial natriuretic peptide receptor 3 (NPR3) of Bos taurus (Bovine).